The sequence spans 426 residues: Tol-Pal system protein TolB (426 aa).

The signal sequence occupies residues 1-25 (MNILLSRFRLLLAAALAALSWGAQA).

The protein belongs to the TolB family. As to quaternary structure, the Tol-Pal system is composed of five core proteins: the inner membrane proteins TolA, TolQ and TolR, the periplasmic protein TolB and the outer membrane protein Pal. They form a network linking the inner and outer membranes and the peptidoglycan layer.

The protein localises to the periplasm. Part of the Tol-Pal system, which plays a role in outer membrane invagination during cell division and is important for maintaining outer membrane integrity. The sequence is that of Tol-Pal system protein TolB from Aromatoleum aromaticum (strain DSM 19018 / LMG 30748 / EbN1) (Azoarcus sp. (strain EbN1)).